Here is a 462-residue protein sequence, read N- to C-terminus: CD-NTase-associated protein 4 (462 aa).

The tract at residues 1-226 is N-terminal endonuclease domain; sequence MSASLLEKQS…FENFICHALE (226 aa). Catalysis depends on residues aspartate 50, glutamate 67, and lysine 69. A Mg(2+)-binding site is contributed by aspartate 50. Residues 235 to 462 are C-terminal SAVED domain; it reads DPIKINLSAS…QYIPTAELNL (228 aa). 2',3',3'-c-tri-AMP contacts are provided by residues 299–301, tryptophan 449, and tyrosine 454; that span reads KQR.

Belongs to the Cap4 nuclease family. In terms of assembly, a monomer in the absence of ligand, in its presence it forms oligomers. A divalent metal cation serves as cofactor.

DNase activity is activated upon ligand binding. Inhibited by EDTA. In terms of biological role, effector DNase of a CBASS antivirus system. CBASS (cyclic oligonucleotide-based antiphage signaling system) provides immunity against bacteriophage. The CD-NTase protein synthesizes cyclic nucleotides in response to infection; these serve as specific second messenger signals. The signals activate a diverse range of effectors, leading to bacterial cell death and thus abortive phage infection. A type II-C(AAAA) CBASS system. Functionally, binds cyclic nucleotide second messengers (synthesized by CdnD, the cognate CD-NTase in the CBASS operon). Ligand binding activates it to endonucleolytically degrade dsDNA to approximately 6 bp length fragments, with a preference for 5'-C or 5'-G cleavage site. The minor product of CdnD is the activating nucleotide; also binds the major product (2',3',3'-cyclic AMP-AMP-AMP) but is not activated by it. Only binds DNA in the presence of ligand. Is not activated by c-di-AMP, c-di-GMP, 3'3'-cyclic GMP-AMP (3'3'-cGAMP) or 3',3',3'-cyclic AMP-AMP-GMP. The sequence is that of CD-NTase-associated protein 4 from Acinetobacter sp. (strain ATCC 27244 / 9458).